Consider the following 101-residue polypeptide: Small ribosomal subunit protein uS14 (101 aa).

Belongs to the universal ribosomal protein uS14 family. In terms of assembly, part of the 30S ribosomal subunit. Contacts proteins S3 and S10.

Its function is as follows. Binds 16S rRNA, required for the assembly of 30S particles and may also be responsible for determining the conformation of the 16S rRNA at the A site. The sequence is that of Small ribosomal subunit protein uS14 from Pelagibacter ubique (strain HTCC1062).